Here is a 232-residue protein sequence, read N- to C-terminus: Proteasome subunit alpha type-2 (232 aa).

It belongs to the peptidase T1A family. The 26S proteasome consists of a 20S proteasome core and two 19S regulatory subunits. The 20S proteasome core is composed of 28 subunits that are arranged in four stacked rings, resulting in a barrel-shaped structure. The two end rings are each formed by seven alpha subunits, and the two central rings are each formed by seven beta subunits. The catalytic chamber with the active sites is on the inside of the barrel.

Its subcellular location is the cytoplasm. The protein localises to the nucleus. In terms of biological role, the proteasome is a multicatalytic proteinase complex which is characterized by its ability to cleave peptides with Arg, Phe, Tyr, Leu, and Glu adjacent to the leaving group at neutral or slightly basic pH. The proteasome has an ATP-dependent proteolytic activity. The protein is Proteasome subunit alpha type-2 (psmA2) of Dictyostelium discoideum (Social amoeba).